A 286-amino-acid polypeptide reads, in one-letter code: DegV domain-containing protein M6_Spy1658 (286 aa).

The DegV domain occupies 3–282; it reads FTIMTDSTAD…PNTLAVFVIG (280 aa). Hexadecanoate-binding residues include Thr62 and Ser94.

Its function is as follows. May bind long-chain fatty acids, such as palmitate, and may play a role in lipid transport or fatty acid metabolism. This Streptococcus pyogenes serotype M6 (strain ATCC BAA-946 / MGAS10394) protein is DegV domain-containing protein M6_Spy1658.